A 251-amino-acid chain; its full sequence is 5'-nucleotidase SurE (251 aa).

Aspartate 8, aspartate 9, serine 39, and asparagine 95 together coordinate a divalent metal cation.

Belongs to the SurE nucleotidase family. The cofactor is a divalent metal cation.

It is found in the cytoplasm. The enzyme catalyses a ribonucleoside 5'-phosphate + H2O = a ribonucleoside + phosphate. Functionally, nucleotidase that shows phosphatase activity on nucleoside 5'-monophosphates. This is 5'-nucleotidase SurE from Clostridium botulinum (strain Eklund 17B / Type B).